Here is a 159-residue protein sequence, read N- to C-terminus: Ribosomal RNA large subunit methyltransferase H (159 aa).

Residues Leu76 and Gly108 each contribute to the S-adenosyl-L-methionine site.

The protein belongs to the RNA methyltransferase RlmH family. In terms of assembly, homodimer.

The protein localises to the cytoplasm. The catalysed reaction is pseudouridine(1915) in 23S rRNA + S-adenosyl-L-methionine = N(3)-methylpseudouridine(1915) in 23S rRNA + S-adenosyl-L-homocysteine + H(+). Functionally, specifically methylates the pseudouridine at position 1915 (m3Psi1915) in 23S rRNA. This is Ribosomal RNA large subunit methyltransferase H from Limosilactobacillus reuteri (strain DSM 20016) (Lactobacillus reuteri).